We begin with the raw amino-acid sequence, 1083 residues long: Solute carrier family 12 member 7 (1083 aa).

The tract at residues 1–51 is disordered; that stretch reads MPTNFTVVPVEARADGAGDEAAERTEEPGSPESADPACPTPGDGNPRENSP. Residues 1–119 lie on the Cytoplasmic side of the membrane; the sequence is MPTNFTVVPV…RREIKAPRMG (119 aa). The segment covering 12–27 has biased composition (basic and acidic residues); that stretch reads ARADGAGDEAAERTEE. Phosphoserine is present on residues S30, S33, S50, and S62. The chain crosses the membrane as a discontinuously helical span at residues 120 to 142; sequence TFIGVYLPCLQNILGVILFLRLT. N131 and I132 together coordinate K(+). Position 135 (V135) interacts with chloride. Residues 143-149 lie on the Extracellular side of the membrane; it reads WIVGAAG. A helical membrane pass occupies residues 150-172; it reads VLESFLIVAMCCTCTMLTAISMS. The Cytoplasmic portion of the chain corresponds to 173-196; that stretch reads AIATNGVVPAGGSYYMISRSLGPE. The chain crosses the membrane as a helical span at residues 197–225; that stretch reads FGGAVGLCFYLGTTFAGAMYILGTIEIFL. Residues 226 to 249 lie on the Extracellular side of the membrane; that stretch reads TYISPSAAIFQAETADGEAAALLN. 2 helical membrane passes run 250-271 and 272-300; these read NMRV…VGVK and YVNK…KTAF. Residues 301–419 lie on the Extracellular side of the membrane; it reads APPDIPVCLL…PYVLTDIMTY (119 aa). 3 N-linked (GlcNAc...) asparagine glycosylation sites follow: N312, N331, and N360. Residues 420-440 form a helical membrane-spanning segment; sequence FTMLVGIYFPSVTGIMAGSNR. P429 and T432 together coordinate K(+). P429 is a binding site for chloride. Chloride is bound by residues G433 and I434. Residues 441 to 450 lie on the Cytoplasmic side of the membrane; that stretch reads SGDLKDAQKS. Residues 451 to 473 form a helical membrane-spanning segment; the sequence is IPTGTILAIVTTSFIYLSCIVLF. The Extracellular segment spans residues 474–504; sequence GACIEGVVLRDKFGEALQGNLVIGMLAWPSP. The helical transmembrane segment at 505–531 threads the bilayer; it reads WVIVIGSFFSTCGAGLQSLTGAPRLLQ. Topologically, residues 532-554 are cytoplasmic; sequence AIARDGIIPFLQVFGHGKANGEP. The next 2 helical transmembrane spans lie at 555–573 and 574–598; these read TWAL…LIAS and LDSV…ACAV. Residue Y589 participates in chloride binding. Residues 599–612 are Cytoplasmic-facing; it reads QTLLRTPNWRPRFK. A run of 2 helical transmembrane segments spans residues 613–635 and 636–651; these read FYHW…ICSW and YYAL…IYKY. The Cytoplasmic portion of the chain corresponds to 652-1083; it reads IEYRGAEKEW…GGREVITIYS (432 aa). The tract at residues 664-680 is scissor helix; sequence GIRGLSLNAARYALLRV. 2 positions are modified to phosphothreonine: T973 and T980.

It belongs to the SLC12A transporter family. K/Cl co-transporter subfamily. As to quaternary structure, homodimer; adopts a domain-swap conformation at the scissor helices connecting the transmembrane domain and C-terminal domain. Heterodimer with K-Cl cotransporter SLC12A5. In terms of tissue distribution, widely expressed with highest levels in kidney, liver and pancreas. Expressed in choroid plexus and suprachiasmatic nucleus.

The protein resides in the cell membrane. The enzyme catalyses K(+)(in) + chloride(in) = K(+)(out) + chloride(out). Its activity is regulated as follows. Activated by N-ethylmaleimide (NEM). Inhibited by furosemide, DIDS and bumetanide. The inhibition is much stronger in the presence of 50 mM K(+) in the uptake medium. Inhibited by DIOA. Inhibited by WNK3. Mediates electroneutral potassium-chloride cotransport when activated by cell swelling. May mediate K(+) uptake into Deiters' cells in the cochlea and contribute to K(+) recycling in the inner ear. Important for the survival of cochlear outer and inner hair cells and the maintenance of the organ of Corti. May be required for basolateral Cl(-) extrusion in the kidney and contribute to renal acidification. This chain is Solute carrier family 12 member 7, found in Rattus norvegicus (Rat).